Here is a 212-residue protein sequence, read N- to C-terminus: FMN-dependent NADH:quinone oxidoreductase (212 aa).

Residues S10, 16-18, and 98-101 contribute to the FMN site; these read SFS and MWNF.

This sequence belongs to the azoreductase type 1 family. In terms of assembly, homodimer. It depends on FMN as a cofactor.

The enzyme catalyses 2 a quinone + NADH + H(+) = 2 a 1,4-benzosemiquinone + NAD(+). It carries out the reaction N,N-dimethyl-1,4-phenylenediamine + anthranilate + 2 NAD(+) = 2-(4-dimethylaminophenyl)diazenylbenzoate + 2 NADH + 2 H(+). Quinone reductase that provides resistance to thiol-specific stress caused by electrophilic quinones. Functionally, also exhibits azoreductase activity. Catalyzes the reductive cleavage of the azo bond in aromatic azo compounds to the corresponding amines. This Desulfotalea psychrophila (strain LSv54 / DSM 12343) protein is FMN-dependent NADH:quinone oxidoreductase.